The following is a 164-amino-acid chain: HTH-type transcriptional regulator IscR (164 aa).

The HTH rrf2-type domain maps to 2-131 (RLTSKGRYAV…NNITLDELVN (130 aa)). A DNA-binding region (H-T-H motif) is located at residues 28–51 (LADISERQGISLSYLEQLFSRLRK). Positions 92, 98, and 104 each coordinate [2Fe-2S] cluster.

[2Fe-2S] cluster serves as cofactor.

Regulates the transcription of several operons and genes involved in the biogenesis of Fe-S clusters and Fe-S-containing proteins. The polypeptide is HTH-type transcriptional regulator IscR (Pectobacterium carotovorum subsp. carotovorum (strain PC1)).